A 261-amino-acid chain; its full sequence is Insulin-like growth factor-binding protein-related protein 1 (261 aa).

The first 17 residues, 1 to 17, serve as a signal peptide directing secretion; that stretch reads MWIPLLLVALVVPAIRC. The IGFBP N-terminal domain maps to 18–101; that stretch reads ERKCGECNPE…DPPEAMCVCL (84 aa). 8 disulfide bridges follow: Cys21-Cys45, Cys24-Cys47, Cys29-Cys48, Cys36-Cys51, Cys59-Cys82, Cys76-Cys98, Cys100-Cys118, and Cys107-Cys139. One can recognise a Kazal-like domain in the interval 70 to 141; the sequence is NRGHGPCGEY…RAMHRGPCKS (72 aa). The 101-residue stretch at 143 to 243 folds into the Ig-like C2-type domain; sequence PKITSPPEEA…GESSAAARVV (101 aa). Asn154 is a glycosylation site (N-linked (GlcNAc...) asparagine). A disulfide bridge connects residues Cys164 and Cys227.

As to expression, expressed by the venom gland.

Its subcellular location is the secreted. This chain is Insulin-like growth factor-binding protein-related protein 1, found in Cupiennius salei (American wandering spider).